The sequence spans 351 residues: Histidinol-phosphate aminotransferase (351 aa).

At lysine 213 the chain carries N6-(pyridoxal phosphate)lysine.

It belongs to the class-II pyridoxal-phosphate-dependent aminotransferase family. Histidinol-phosphate aminotransferase subfamily. Homodimer. It depends on pyridoxal 5'-phosphate as a cofactor.

It carries out the reaction L-histidinol phosphate + 2-oxoglutarate = 3-(imidazol-4-yl)-2-oxopropyl phosphate + L-glutamate. It functions in the pathway amino-acid biosynthesis; L-histidine biosynthesis; L-histidine from 5-phospho-alpha-D-ribose 1-diphosphate: step 7/9. This is Histidinol-phosphate aminotransferase from Thermoanaerobacter pseudethanolicus (strain ATCC 33223 / 39E) (Clostridium thermohydrosulfuricum).